The chain runs to 397 residues: MGFLKVLATSLATLAVVDAGTLLTASNTDAVIPSSYIVVMNDDVSTAEFNTHREWATNVHARLSRRKNGETGPGKHFEINGLKGYTASFDESTAKDIANDPAVKYIEPDMIVNATANVVQSNVPSWGLARISSKRTGTTSYTYDSTAGEGVVFYGVDTGIDISHSDFGGRAKWGTNVVDNDNTDGNGHGTHTASTAAGSKYGVAKKATLVAVKVLGADGSGTNSGVISGMDWAVKDAKSRGANGKYVMNMSLGGEFSKAVNDAAANVVKSGIFLSVAAGNEAENASNSSPASAAEVCTIAASTSTDGSASFTNFGSVVDLYAPGQSITAAYPGGGSKTLSGTSMAAPHVAGVAAYLMALEGVSAGNACARIVQLATSSISRAPSGTTSKLLYNGINV.

The signal sequence occupies residues 1-19; sequence MGFLKVLATSLATLAVVDA. The propeptide at 20–115 is removed in mature form; sequence GTLLTASNTD…IEPDMIVNAT (96 aa). In terms of domain architecture, Inhibitor I9 spans 35–113; that stretch reads SYIVVMNDDV…KYIEPDMIVN (79 aa). A Peptidase S8 domain is found at 125-397; sequence SWGLARISSK…SKLLYNGINV (273 aa). Residues Asp157, His188, and Ser343 each act as charge relay system in the active site.

Belongs to the peptidase S8 family.

It is found in the secreted. With respect to regulation, inhibited by 0.1 mM diisopropyl fluorophosphate (DFP), phenylmethanesulfonyl fluoride (PMSF), chymostatin and elastatinal. Not inhibited by N-alpha-p-tosyl-L-lysine chloromethylketone (TLCK), N-tosyl-L-phenylalanyl chloromethyl ketone (TPCK) or N-carbobenzoxy-L-phenylalanine chloromethylketone (ZPCK). In terms of biological role, serine protease. Hydrolyzes azocasein. Cleaves peptide bonds of the oxidized insulin B chain preferably at 15-Leu-|-Tyr-16, but also at 4-Gln-|-His-5 and 24-Phe-|-Phe-25, and to a lesser extent at 5-His-|-Leu-6 and 25-Phe-|-Tyr-26. Hydrolyzes amide bonds between amino acids and 7-amino-4-methylcoumarin (AMC) in vitro. The polypeptide is Subtilisin-like serine protease Pen c 1 (Penicillium citrinum).